The chain runs to 111 residues: Large ribosomal subunit protein eL30 (111 aa).

It belongs to the eukaryotic ribosomal protein eL30 family.

This Oryza sativa subsp. japonica (Rice) protein is Large ribosomal subunit protein eL30 (RPL30).